Reading from the N-terminus, the 518-residue chain is ETHYLENE INSENSITIVE 3-like 2 protein (518 aa).

A coiled-coil region spans residues 37-73 (DDLSSDEEMEIEELEKKIWRDKQRLKRLKEMAKNGLG). Positions 450-518 (FNHPNDLYRP…GQELPTSWIQ (69 aa)) are disordered. Polar residues-rich tracts occupy residues 475–484 (PSPSTLNQNL) and 500–518 (GTENNLHNQGQELPTSWIQ).

This sequence belongs to the EIN3 family. In terms of assembly, acts as a homodimer to bind the primary ethylene response element.

It localises to the nucleus. In terms of biological role, probable transcription factor acting as a positive regulator in the ethylene response pathway. Could bind the primary ethylene response element present in the ETHYLENE-RESPONSE-FACTOR1 promoter. The polypeptide is ETHYLENE INSENSITIVE 3-like 2 protein (EIL2) (Arabidopsis thaliana (Mouse-ear cress)).